Consider the following 251-residue polypeptide: 5'-nucleotidase SurE (251 aa).

Residues Asp8, Asp9, Ser39, and Asn90 each coordinate a divalent metal cation.

This sequence belongs to the SurE nucleotidase family. A divalent metal cation is required as a cofactor.

It localises to the cytoplasm. It catalyses the reaction a ribonucleoside 5'-phosphate + H2O = a ribonucleoside + phosphate. In terms of biological role, nucleotidase that shows phosphatase activity on nucleoside 5'-monophosphates. This Legionella pneumophila subsp. pneumophila (strain Philadelphia 1 / ATCC 33152 / DSM 7513) protein is 5'-nucleotidase SurE.